We begin with the raw amino-acid sequence, 1060 residues long: Carbamoyl phosphate synthase large chain (1060 aa).

Residues 1–401 (MPKRQDIHKI…SLLKAVRSLE (401 aa)) are carboxyphosphate synthetic domain. Residues R129, R169, G175, G176, R208, I210, E215, G241, V242, H243, Q284, and E298 each coordinate ATP. Residues 133-327 (KNLMQKLHEP…IAKMAAKIAV (195 aa)) form the ATP-grasp 1 domain. Q284, E298, and N300 together coordinate Mg(2+). Mn(2+) is bound by residues Q284, E298, and N300. Residues 402-546 (VGLIHPERPA…YSTYESSTES (145 aa)) are oligomerization domain. Residues 547–929 (VKSDKPSVLV…ALYKAFEAAG (383 aa)) form a carbamoyl phosphate synthetic domain region. Residues 671–861 (DQVIKSLKLP…LAQVATLAIL (191 aa)) enclose the ATP-grasp 2 domain. ATP-binding residues include R707, H746, L748, E752, G777, I778, H779, S780, Q820, and E832. Mg(2+)-binding residues include Q820, E832, and N834. Mn(2+)-binding residues include Q820, E832, and N834. The MGS-like domain occupies 930-1060 (MHLPQFGRAL…QAFSISPIKS (131 aa)). Positions 930–1060 (MHLPQFGRAL…QAFSISPIKS (131 aa)) are allosteric domain.

This sequence belongs to the CarB family. In terms of assembly, composed of two chains; the small (or glutamine) chain promotes the hydrolysis of glutamine to ammonia, which is used by the large (or ammonia) chain to synthesize carbamoyl phosphate. Tetramer of heterodimers (alpha,beta)4. The cofactor is Mg(2+). Mn(2+) is required as a cofactor.

The catalysed reaction is hydrogencarbonate + L-glutamine + 2 ATP + H2O = carbamoyl phosphate + L-glutamate + 2 ADP + phosphate + 2 H(+). It carries out the reaction hydrogencarbonate + NH4(+) + 2 ATP = carbamoyl phosphate + 2 ADP + phosphate + 2 H(+). It functions in the pathway amino-acid biosynthesis; L-arginine biosynthesis; carbamoyl phosphate from bicarbonate: step 1/1. It participates in pyrimidine metabolism; UMP biosynthesis via de novo pathway; (S)-dihydroorotate from bicarbonate: step 1/3. In terms of biological role, large subunit of the glutamine-dependent carbamoyl phosphate synthetase (CPSase). CPSase catalyzes the formation of carbamoyl phosphate from the ammonia moiety of glutamine, carbonate, and phosphate donated by ATP, constituting the first step of 2 biosynthetic pathways, one leading to arginine and/or urea and the other to pyrimidine nucleotides. The large subunit (synthetase) binds the substrates ammonia (free or transferred from glutamine from the small subunit), hydrogencarbonate and ATP and carries out an ATP-coupled ligase reaction, activating hydrogencarbonate by forming carboxy phosphate which reacts with ammonia to form carbamoyl phosphate. This Lacticaseibacillus paracasei (strain ATCC 334 / BCRC 17002 / CCUG 31169 / CIP 107868 / KCTC 3260 / NRRL B-441) (Lactobacillus paracasei) protein is Carbamoyl phosphate synthase large chain.